The sequence spans 266 residues: Protein-ADP-ribose hydrolase (266 aa).

A Macro domain is found at 74 to 265; that stretch reads TDLKDLKPIK…LYKEAFNRDA (192 aa). ADP-D-ribose contacts are provided by Asp93, Ile94, and Asn107. Positions 113, 118, and 120 each coordinate Zn(2+). Positions 120, 121, 122, 212, 213, 214, and 216 each coordinate ADP-D-ribose.

The protein belongs to the MacroD-type family. Zn-Macro subfamily. Zn(2+) serves as cofactor.

It carries out the reaction 4-O-(ADP-D-ribosyl)-L-aspartyl-[protein] + H2O = L-aspartyl-[protein] + ADP-D-ribose + H(+). Its function is as follows. ADP-ribosylhydrolase that specifically reverses the SirTM-mediated mono-ADP-ribosylation at an asparatate residue of GcvH-L, by releasing ADP-ribose from the target protein. May play a role in the regulation of the response to host-induced oxidative stress. This is Protein-ADP-ribose hydrolase from Staphylococcus aureus (strain MSSA476).